The following is a 179-amino-acid chain: Dual-action ribosomal maturation protein DarP (179 aa).

The protein belongs to the DarP family.

It is found in the cytoplasm. In terms of biological role, member of a network of 50S ribosomal subunit biogenesis factors which assembles along the 30S-50S interface, preventing incorrect 23S rRNA structures from forming. Promotes peptidyl transferase center (PTC) maturation. This chain is Dual-action ribosomal maturation protein DarP, found in Erwinia tasmaniensis (strain DSM 17950 / CFBP 7177 / CIP 109463 / NCPPB 4357 / Et1/99).